A 1226-amino-acid chain; its full sequence is Arf guanine nucleotide exchange factor SYT1 (1226 aa).

Disordered stretches follow at residues 17–39 and 113–158; these read HSND…DKLR and RNGQ…RNSK. Positions 131–142 are enriched in basic and acidic residues; the sequence is SIEKVPKPDGER. Position 277 is a phosphothreonine (T277). Disordered stretches follow at residues 311–405, 954–1022, and 1178–1198; these read NSLM…TGMS, STGS…NEDY, and LEHG…DGID. A compositionally biased stretch (polar residues) spans 349–360; that stretch reads LSRSRSQSTSFV. A Phosphoserine modification is found at S369. A compositionally biased stretch (polar residues) spans 386–405; sequence GPTSVYNNKSNANSTITGMS. The region spanning 405–620 is the SEC7 domain; it reads SRRSSSIVNA…TYFYENVTAK (216 aa). One can recognise a PH domain in the interval 844–1074; sequence ILQMGAIMNL…DSINLFSAYD (231 aa). 2 stretches are compositionally biased toward low complexity: residues 956–969 and 994–1017; these read GSHT…SSSA and SSVS…SSND.

The protein resides in the cytoplasm. Inhibited by brefeldin A. Its function is as follows. Guanine nucleotide exchange factor for Arf GTPases, stimulating the nucleotide exchange from the GDP-bound to the GTP-bound form. Catalyzes both the GDP release by and the GTP binding to ARF2. Has no exchange activity on Rab GTPases. Involved in vesicular transport. This Saccharomyces cerevisiae (strain ATCC 204508 / S288c) (Baker's yeast) protein is Arf guanine nucleotide exchange factor SYT1 (SYT1).